The chain runs to 83 residues: Sulfur carrier protein TusA (83 aa).

Cys-20 (cysteine persulfide intermediate) is an active-site residue.

It belongs to the sulfur carrier protein TusA family.

The protein localises to the cytoplasm. In terms of biological role, sulfur carrier protein which probably makes part of a sulfur-relay system. The polypeptide is Sulfur carrier protein TusA (Pseudomonas fluorescens (strain SBW25)).